A 96-amino-acid chain; its full sequence is Probable RNA-binding protein YqeI (96 aa).

Residues 1–96 (MLTGKQKRFL…SKENKQIELP (96 aa)) form the CRM domain.

In Bacillus subtilis (strain 168), this protein is Probable RNA-binding protein YqeI (yqeI).